The following is a 975-amino-acid chain: Kinesin-like protein KIN-14K (975 aa).

The disordered stretch occupies residues 1 to 40; the sequence is MKNRIKKGSSMIGVYGRSDGSSSIQSSNGSESRESIDDNK. Over residues 17-30 the composition is skewed to low complexity; it reads RSDGSSSIQSSNGS. Residues 31–40 show a composition bias toward basic and acidic residues; that stretch reads ESRESIDDNK. Residues 40–143 form the Calponin-homology (CH) domain; it reads KQGHQSLVEW…SLKALKASFS (104 aa). Residues 289-345 adopt a coiled-coil conformation; the sequence is KERSNAELSKLKQELEIVKETHEKQFLELKLNAQKAKVELERQVKNSELRVVEAKEL. The Kinesin motor domain occupies 436–746; the sequence is NIRVYCRIRP…LKFAERVSGV (311 aa). Residue 520–527 coordinates ATP; it reads GQTGSGKT. Residues 757–788 are a coiled coil; that stretch reads GRDVRQLMEQVSNLKDMIAKKDEELQKFQNIN. Disordered stretches follow at residues 801-852 and 900-975; these read VSPP…GAKD and LFPE…NRKR. Positions 944–958 are enriched in low complexity; the sequence is LSISTTSSKALTSSK.

It belongs to the TRAFAC class myosin-kinesin ATPase superfamily. Kinesin family. KIN-14 subfamily.

This is Kinesin-like protein KIN-14K from Arabidopsis thaliana (Mouse-ear cress).